The chain runs to 32 residues: Protein YthB (32 aa).

This Escherichia coli (strain K12) protein is Protein YthB.